Here is a 644-residue protein sequence, read N- to C-terminus: Fructose-1,6-bisphosphatase class 3 (644 aa).

This sequence belongs to the FBPase class 3 family. Requires Mn(2+) as cofactor.

The catalysed reaction is beta-D-fructose 1,6-bisphosphate + H2O = beta-D-fructose 6-phosphate + phosphate. It participates in carbohydrate biosynthesis; gluconeogenesis. This is Fructose-1,6-bisphosphatase class 3 from Oceanobacillus iheyensis (strain DSM 14371 / CIP 107618 / JCM 11309 / KCTC 3954 / HTE831).